The following is a 1997-amino-acid chain: Otoferlin (1997 aa).

Residues 1 to 98 (MALLIHLKTV…VEESHVEVTD (98 aa)) form the C2 1 domain. Over 1–1963 (MALLIHLKTV…ARYFLWHTYR (1963 aa)) the chain is Cytoplasmic. Residues 128–171 (WDDGDFLGDESLQEEEKDSQETDGLLPGSRPSSRPPGEKSFRRA) form a disordered region. Positions 129–145 (DDGDFLGDESLQEEEKD) are enriched in acidic residues. C2 domains lie at 236 to 357 (KRSK…HKWA) and 400 to 531 (IEGN…FLPT). A disordered region spans residues 642–694 (NEVDGLSRPQRPRPRKEPGDEEEVDLIQNASDDEAGDAGDLASVSSTPPMRPQ). Residues 660–678 (GDEEEVDLIQNASDDEAGD) show a composition bias toward acidic residues. The stretch at 792–821 (RERLKSCMRELENMGQQARMLRAQVKRHTV) forms a coiled coil. 2 consecutive C2 domains span residues 944 to 1069 (LHAF…PPRF) and 1115 to 1242 (DRGP…PSWN). Ca(2+) contacts are provided by Asp976, Asp982, Asp1038, Asp1040, and Asp1046. Disordered stretches follow at residues 1299-1324 (AEEE…PDES) and 1343-1405 (LRQQ…KPKI). Composition is skewed to acidic residues over residues 1314–1324 (EEPEEEEPDES) and 1352–1361 (DLEEKEEVDN). Residues 1370–1383 (KGKEKARAAKEEKK) show a composition bias toward basic and acidic residues. Positions 1387-1396 (QSSGSGQGSE) are enriched in low complexity. C2 domains lie at 1464 to 1593 (LPED…ATCG) and 1714 to 1865 (DMPA…KQCT). Residues Asp1508, Asp1514, Asp1563, Asp1565, Asp1571, Asp1836, Ser1839, and Asp1842 each coordinate Ca(2+). Residues 1964-1984 (WLLLKLLLLLLLLLLLALFLY) traverse the membrane as a helical segment. Residues 1985-1997 (SVPGYLVKKILGA) lie on the Extracellular side of the membrane.

The protein belongs to the ferlin family. In terms of assembly, interacts with SNAP2; the interaction is direct. Interacts with STX1; the interaction is direct. Interacts with RAB8B. The cofactor is Ca(2+). As to expression, isoform 1 and isoform 3 are found in adult brain. Isoform 2 is expressed in the fetus and in adult brain, heart, placenta, skeletal muscle and kidney.

The protein localises to the cytoplasmic vesicle. The protein resides in the secretory vesicle. It localises to the synaptic vesicle membrane. It is found in the basolateral cell membrane. Its subcellular location is the endoplasmic reticulum membrane. The protein localises to the golgi apparatus membrane. The protein resides in the presynaptic cell membrane. It localises to the cell membrane. Its function is as follows. Key calcium ion sensor involved in the Ca(2+)-triggered synaptic vesicle-plasma membrane fusion and in the control of neurotransmitter release at these output synapses. Interacts in a calcium-dependent manner to the presynaptic SNARE proteins at ribbon synapses of cochlear inner hair cells (IHCs) to trigger exocytosis of neurotransmitter. Also essential to synaptic exocytosis in immature outer hair cells (OHCs). May also play a role within the recycling of endosomes. The polypeptide is Otoferlin (OTOF) (Homo sapiens (Human)).